Consider the following 311-residue polypeptide: Cytochrome c biogenesis protein CcsA (311 aa).

A run of 8 helical transmembrane segments spans residues 11–31 (VLLL…LAFW), 44–64 (VVQL…LWRW), 68–88 (GHFP…GCTF), 101–121 (LVPA…SFAL), 146–166 (VIMM…AVLF), 217–237 (TITV…VWAN), 251–268 (TWAL…HTRL), and 280–300 (VAVS…LLGI).

The protein belongs to the CcmF/CycK/Ccl1/NrfE/CcsA family. In terms of assembly, may interact with ccs1.

Its subcellular location is the cellular thylakoid membrane. In terms of biological role, required during biogenesis of c-type cytochromes (cytochrome c6 and cytochrome f) at the step of heme attachment. This chain is Cytochrome c biogenesis protein CcsA, found in Synechococcus sp. (strain RCC307).